The following is a 96-amino-acid chain: UPF0251 protein Ssed_3913 (96 aa).

It belongs to the UPF0251 family.

This Shewanella sediminis (strain HAW-EB3) protein is UPF0251 protein Ssed_3913.